Here is a 705-residue protein sequence, read N- to C-terminus: UvrABC system protein C (705 aa).

Residues 16-95 (ETPGVYRFRD…IKQFDPRFNV (80 aa)) enclose the GIY-YIG domain. Positions 208-243 (GRYLRRLEREMQQAAQAQEYERAARLRDDIGALRRA) constitute a UVR domain. Residues 315-332 (AASTGTAGSTVPTTTAGS) are compositionally biased toward low complexity. Disordered regions lie at residues 315–335 (AAST…SQGE) and 683–705 (RADA…ETVS).

The protein belongs to the UvrC family. Interacts with UvrB in an incision complex.

It localises to the cytoplasm. Its function is as follows. The UvrABC repair system catalyzes the recognition and processing of DNA lesions. UvrC both incises the 5' and 3' sides of the lesion. The N-terminal half is responsible for the 3' incision and the C-terminal half is responsible for the 5' incision. The polypeptide is UvrABC system protein C (Frankia casuarinae (strain DSM 45818 / CECT 9043 / HFP020203 / CcI3)).